The chain runs to 203 residues: UPF0637 protein SSP1683 (203 aa).

It belongs to the UPF0637 family.

This Staphylococcus saprophyticus subsp. saprophyticus (strain ATCC 15305 / DSM 20229 / NCIMB 8711 / NCTC 7292 / S-41) protein is UPF0637 protein SSP1683.